A 755-amino-acid chain; its full sequence is Transcription factor kayak, isoforms A/B/F (755 aa).

Low complexity-rich tracts occupy residues 23 to 66 (FAQQ…LPTQ) and 149 to 159 (QQHYPSESQSS). 4 disordered regions span residues 23–75 (FAQQ…SQSV), 149–168 (QQHY…PETP), 316–350 (LGQG…HTDS), and 383–440 (GSAS…KRRV). Positions 316-333 (LGQGSESEDSNASYNDTQ) are enriched in polar residues. 2 stretches are compositionally biased toward low complexity: residues 341-350 (TDTSSAHTDS) and 383-397 (GSAS…TSNT). The bZIP domain maps to 418–481 (EQKRAVRRER…NQLEYLLATH (64 aa)). A basic motif region spans residues 420–439 (KRAVRRERNKQAAARCRKRR). The interval 446-453 (LTEEVEQL) is leucine-zipper. The span at 510 to 531 (AGSSGSGASSHHNHNSNDSSNG) shows a compositional bias: low complexity. Disordered regions lie at residues 510-552 (AGSS…PLDL) and 716-755 (DGGT…LVSL). Over residues 539–549 (TLNSTGRSNSP) the composition is skewed to polar residues. Residue Ser548 is modified to Phosphoserine.

Belongs to the bZIP family. Fos subfamily. In terms of assembly, homodimer. Heterodimer with Jra. The kay-Jra heterodimer binds more stably to the AP-1 site than either of the two proteins alone. As to expression, early expression in the embryo is mesodermal and some of this expression is localized to a region surrounding the cephalic furrow. Later in embryonic development expression is ectodermal, corresponding to muscle attachment sites. Also observed in part of the mid- and hindgut and in the anal pad.

The protein localises to the nucleus. Its function is as follows. Developmentally regulated transcription factor AP-1 binds and recognizes the enhancer DNA sequence: 5'-TGA[CG]TCA-3'. May play a role in the function or determination of a particular subset of cells in the developing embryo. It is able to carry out its function either independently of or in conjunction with Jra. This is Transcription factor kayak, isoforms A/B/F (kay) from Drosophila melanogaster (Fruit fly).